Consider the following 1809-residue polypeptide: MTSNNQNNSSSHQHLHSPSKLTEFARNFEDKPESLFGRVVNKIQNVYNQSYNTVNDISSGSSSSSSTQPVQVVGKSQFFSDSQTSTAEIADVETSSQSSVRPQPPTTLSIRTNSETRGTSTSSNTAAEDSETSDRVETLPLPTSEANQGRTVSNVLKHISNIVATKNNNDLRNYKDTELQRFWMPDSKAKECYDCSQKFSTFRRKHHCRLCGQIFCSKCCNQVVPGMIIRCDGDLKVCNYCSKIVLTFLKSSSSEMGQDMQELQQHLSNKLEVQDSGSSLAKHPQMQRAPLPRKTSVGYQEERFSSHPTYTTLSIDDRKNILQQSNSLITLHEEMQRDLPAQNCGQRLIEFLNSNNKSANEVQAVAILNAMLAAGFLEPIVPDPEQMDFDSSLHYKFSKSSSSDTSRTMSPQFEANPHAEPQPPKSMDQSAEEKEKELENELENDRCYTTATSKLLASYCEHEEQLLAQMLRAHNLDQEWDKVLQMLCSTAANHFKPEHCSNDLMDIRNYVNFKKVPGGRRKDSKIVHGVAFSKNVAHKDMATHVPFPRILLLQCPIVYERIEGKFVTIETVLLQEKEYLRNVCARIMSFKPNVVLVHKNVAGIAQDLLRSYEVTLVLDVKLSVMERLSRTLQCDIVSSIESNITMPKLGYCNDFYIRNYNGKTLMFFEKLTNPRGYTCLLRGGSNAELTRVKRVASALLFARYNWRLEMSFLLNEFAQPLSPKPSIFDSKETSPKTETEAELRSKRPIILERKSEDKITTIVSENVSDFTDPLRASQAEALSTSPCAPPVVEALAVEPRYDNRFRTALSSTLLSVSPFLTFPLPYLETEQGRKCKLRKLFPAELYFSKQWSRTGLERPDSMGDGEAGKSEPGNKENQMQLLPAHDFVLMKITAPASSRDIQSKLAEFRSFGGRLPKGKAPMLRPKKKNAEVIQRPQKVSEEQLYKDALDPQNHQRLPVLFCSFHYNPKGVSSFCKLPMLLDMKFYGQYDIMLEQFLQRYCCLFNSMCPSCNLPMLGHVRRYVHSLGCVHVYLTEDLTRSDPTRIYFTSWCSICNATTPTIPLSDAAKCLSLAKYLEMRFHGHAYKRRPPSTDAEQGGTVCEHSLHRDYVHHFSFRGVGAKFQYTPVEVWETDLPSLTVQLDLPQPFQSAQVQEEIKNFSIKGHEVYNRIHERIADLATEEENSPLVQHLKTMLTHDQFIFKQKIEIVHTLLTDNRATAYDTSDALAMARRALAESIELWGPRLQEIEKLTAKQAHHIDSGTICTEELRPEQVQTADSSKVTTSSLPKENDPLECPSEDTETGASNSQTVLDKNFSIDQMLASTVNVYSDKKSIRKILTQLLPSGNQVNPLQSPFPAQDHLTLPLGSIPIHVRETDLSSVIAYSLTSMDYQKAIDEAEANSNAAHSSPQLKRKIPLAESVSDAEDSPSLSRTSSNTSAAPNASVPSPATAASESEEKSKERIKQPPSPHITLAFQDHSCQFQCKIYFAREFDAMRSKSLKPPKLDKSLYRRLEKSKMREELRISQSRTGSEMELVRKPSDVGAPRTTEDDSNQEEDARIALARSLCKSVQWEARGGKSGSRFCKTLDDRFVLKEMNSRDMTIFEPFAPKYFEYIDRCQQQQQPTLLAKIFGVFRVSVKKKDSFVERSVMVMENLFYGCNIENKFDLKGSERNRLVDPSNQQGEIVLLDENLVQMSWSKPLYVLSHSKTVLRDAIQRDSSFLEKNLVMDYSLLVGLDKKNGVLVLGIIDYIRTFTLDKRVESIIKGSGILGGKGKDPTVVNPERYKQRFIDAMDRYFLTVPDRWEGLSKV.

Residues 1–12 (MTSNNQNNSSSH) are compositionally biased toward low complexity. Disordered regions lie at residues 1–20 (MTSNNQNNSSSHQHLHSPSK) and 84–146 (TSTA…TSEA). The span at 84 to 127 (TSTAEIADVETSSQSSVRPQPPTTLSIRTNSETRGTSTSSNTAA) shows a compositional bias: polar residues. Residues 186-246 (DSKAKECYDC…VCNYCSKIVL (61 aa)) form an FYVE-type zinc finger. 8 residues coordinate Zn(2+): Cys192, Cys195, Cys208, Cys211, Cys216, Cys219, Cys238, and Cys241. Disordered regions lie at residues 274-300 (QDSGSSLAKHPQMQRAPLPRKTSVGYQ) and 399-444 (KSSS…ELEN). Positions 323–399 (QQSNSLITLH…DSSLHYKFSK (77 aa)) constitute a DEP domain. A compositionally biased stretch (low complexity) spans 399–410 (KSSSSDTSRTMS). Residues 431–444 (AEEKEKELENELEN) are compositionally biased toward basic and acidic residues. Ser755 carries the phosphoserine modification. A Phosphothreonine modification is found at Thr760. Over residues 856-874 (LERPDSMGDGEAGKSEPGN) the composition is skewed to basic and acidic residues. Disordered regions lie at residues 856-876 (LERPDSMGDGEAGKSEPGNKE), 1269-1307 (RPEQVQTADSSKVTTSSLPKENDPLECPSEDTETGASNS), 1399-1465 (ANSN…IKQP), and 1521-1554 (LRISQSRTGSEMELVRKPSDVGAPRTTEDDSNQE). Residues 1272 to 1287 (QVQTADSSKVTTSSLP) are compositionally biased toward polar residues. Residues 1426 to 1452 (SPSLSRTSSNTSAAPNASVPSPATAAS) show a composition bias toward low complexity. Positions 1454-1463 (SEEKSKERIK) are enriched in basic and acidic residues. A PIPK domain is found at 1473-1796 (AFQDHSCQFQ…RFIDAMDRYF (324 aa)). Ser1530 is modified (phosphoserine). The tract at residues 1552 to 1809 (NQEEDARIAL…PDRWEGLSKV (258 aa)) is catalytic.

Zn(2+) serves as cofactor.

The protein resides in the endosome membrane. The enzyme catalyses a 1,2-diacyl-sn-glycero-3-phospho-(1D-myo-inositol-3-phosphate) + ATP = a 1,2-diacyl-sn-glycero-3-phospho-(1D-myo-inositol-3,5-bisphosphate) + ADP + H(+). In terms of biological role, regulates both the synthesis and turnover of phosphatidylinositol 3,5-bisphosphate (1,2-diacyl-sn-glycero-3-phospho-(1D-myo-inositol-3,5-bisphosphate) or PtdIns(3,5)P2). Catalyzes the phosphorylation of phosphatidylinositol 3-phosphate (1,2-diacyl-sn-glycero-3-phospho-(1D-myo-inositol-3-phosphate)) on the fifth hydroxyl of the myo-inositol ring, to form PtdIns(3,5)P2. Required for endocytic-vacuolar pathway and nuclear migration. Has a role at a late stage in endosome-related membrane trafficking, at a point when signal termination has occurred. Is not required for receptor silencing. The sequence is that of Putative 1-phosphatidylinositol 3-phosphate 5-kinase (fab1) from Drosophila melanogaster (Fruit fly).